Reading from the N-terminus, the 488-residue chain is 3-octaprenyl-4-hydroxybenzoate carboxy-lyase (488 aa).

A Mn(2+)-binding site is contributed by Asn172. Prenylated FMN is bound by residues 175–177, 189–191, and 194–195; these read IYR, RWL, and RG. Position 238 (Glu238) interacts with Mn(2+). The active-site Proton donor is the Asp287.

The protein belongs to the UbiD family. Homohexamer. Prenylated FMN is required as a cofactor. The cofactor is Mn(2+).

The protein localises to the cell membrane. The catalysed reaction is a 4-hydroxy-3-(all-trans-polyprenyl)benzoate + H(+) = a 2-(all-trans-polyprenyl)phenol + CO2. It participates in cofactor biosynthesis; ubiquinone biosynthesis. Functionally, catalyzes the decarboxylation of 3-octaprenyl-4-hydroxy benzoate to 2-octaprenylphenol, an intermediate step in ubiquinone biosynthesis. The protein is 3-octaprenyl-4-hydroxybenzoate carboxy-lyase of Halorhodospira halophila (strain DSM 244 / SL1) (Ectothiorhodospira halophila (strain DSM 244 / SL1)).